A 137-amino-acid polypeptide reads, in one-letter code: Small ribosomal subunit protein uS12 (137 aa).

Asp102 bears the 3-methylthioaspartic acid mark.

Belongs to the universal ribosomal protein uS12 family. Part of the 30S ribosomal subunit. Contacts proteins S8 and S17. May interact with IF1 in the 30S initiation complex.

In terms of biological role, with S4 and S5 plays an important role in translational accuracy. Interacts with and stabilizes bases of the 16S rRNA that are involved in tRNA selection in the A site and with the mRNA backbone. Located at the interface of the 30S and 50S subunits, it traverses the body of the 30S subunit contacting proteins on the other side and probably holding the rRNA structure together. The combined cluster of proteins S8, S12 and S17 appears to hold together the shoulder and platform of the 30S subunit. In Phytoplasma mali (strain AT), this protein is Small ribosomal subunit protein uS12.